The chain runs to 227 residues: Small ribosomal subunit protein uS7 (227 aa).

2 stretches are compositionally biased toward acidic residues: residues 1 to 12 (MSESDTDPDIDD) and 20 to 31 (NDVDVAVDESES). The interval 1–43 (MSESDTDPDIDDDAHNNGDNDVDVAVDESESAETTTDTDTASA) is disordered. Positions 32–43 (AETTTDTDTASA) are enriched in low complexity.

It belongs to the universal ribosomal protein uS7 family. Part of the 30S ribosomal subunit.

In terms of biological role, one of the primary rRNA binding proteins, it binds directly to 16S rRNA where it nucleates assembly of the head domain of the 30S subunit. Is located at the subunit interface close to the decoding center. The sequence is that of Small ribosomal subunit protein uS7 from Haloquadratum walsbyi (strain DSM 16790 / HBSQ001).